The chain runs to 186 residues: GTP-dependent dephospho-CoA kinase (186 aa).

Residues D43, I44, V45, D62, E120, and D143 each coordinate GTP.

This sequence belongs to the GTP-dependent DPCK family.

The catalysed reaction is 3'-dephospho-CoA + GTP = GDP + CoA + H(+). It functions in the pathway cofactor biosynthesis; coenzyme A biosynthesis. Catalyzes the GTP-dependent phosphorylation of the 3'-hydroxyl group of dephosphocoenzyme A to form coenzyme A (CoA). This is GTP-dependent dephospho-CoA kinase from Haloquadratum walsbyi (strain DSM 16790 / HBSQ001).